The sequence spans 388 residues: Myosin light chain kinase family member 4 (388 aa).

The 256-residue stretch at 106-361 folds into the Protein kinase domain; it reads VSKTEILGGG…ASEALKHPWL (256 aa). ATP is bound by residues 112–120 and Lys135; that span reads LGGGRFGQV. The active-site Proton acceptor is Asp227.

This sequence belongs to the protein kinase superfamily. CAMK Ser/Thr protein kinase family.

The enzyme catalyses L-seryl-[protein] + ATP = O-phospho-L-seryl-[protein] + ADP + H(+). It carries out the reaction L-threonyl-[protein] + ATP = O-phospho-L-threonyl-[protein] + ADP + H(+). In Homo sapiens (Human), this protein is Myosin light chain kinase family member 4 (MYLK4).